A 163-amino-acid polypeptide reads, in one-letter code: Cell division protein SepF (163 aa).

The segment at 25–53 is disordered; sequence SVAPHSGEERESAFSRRSAERAERTERPT. Positions 30-51 are enriched in basic and acidic residues; that stretch reads SGEERESAFSRRSAERAERTER.

The protein belongs to the SepF family. Homodimer. Interacts with FtsZ.

It localises to the cytoplasm. Its function is as follows. Cell division protein that is part of the divisome complex and is recruited early to the Z-ring. Probably stimulates Z-ring formation, perhaps through the cross-linking of FtsZ protofilaments. Its function overlaps with FtsA. The sequence is that of Cell division protein SepF from Heliobacterium modesticaldum (strain ATCC 51547 / Ice1).